We begin with the raw amino-acid sequence, 421 residues long: Ameloblastin (421 aa).

The N-terminal stretch at 1–26 is a signal peptide; the sequence is MPALKIPLFKMKDMVLILCLLKMSSA. At Pro37 the chain carries Hydroxyproline. Ser43 bears the Phosphoserine mark. Disordered regions lie at residues 104–126, 264–311, and 333–421; these read PVHP…QKPF, GGMP…ADPE, and GKIP…FQEP. An O-linked (GalNAc...) serine glycan is attached at Ser112. A compositionally biased stretch (low complexity) spans 113–125; it reads QPSLQPQQPGQKP. Residues 339-350 show a composition bias toward low complexity; the sequence is ARGPAGRSRGPP. A compositionally biased stretch (polar residues) spans 388–410; sequence MDSTATPYSEHTSMPGNKAQQPQ. The segment covering 411–421 has biased composition (basic and acidic residues); it reads IKRDAWRFQEP.

This sequence belongs to the ameloblastin family. In terms of tissue distribution, ameloblast-specific. Located at the Tomes processes of secretory ameloblasts and in the sheath space between rod-interrod enamel.

The protein resides in the secreted. It is found in the extracellular space. Its subcellular location is the extracellular matrix. Functionally, involved in the mineralization and structural organization of enamel. The protein is Ameloblastin (AMBN) of Sus scrofa (Pig).